We begin with the raw amino-acid sequence, 395 residues long: Elongation factor Tu (395 aa).

The 200-residue stretch at 6-205 (KPHINVGTIG…NALEKIDLPI (200 aa)) folds into the tr-type G domain. The segment at 15-22 (GHVDHGKT) is G1. A GTP-binding site is contributed by 15-22 (GHVDHGKT). Position 22 (Thr-22) interacts with Mg(2+). The interval 59-63 (GITIS) is G2. Residues 80–83 (DCPG) are G3. Residues 80–84 (DCPGH) and 135–138 (NKCD) each bind GTP. A G4 region spans residues 135 to 138 (NKCD). Residues 173–175 (SAV) form a G5 region.

This sequence belongs to the TRAFAC class translation factor GTPase superfamily. Classic translation factor GTPase family. EF-Tu/EF-1A subfamily. Monomer.

The protein resides in the cytoplasm. The enzyme catalyses GTP + H2O = GDP + phosphate + H(+). GTP hydrolase that promotes the GTP-dependent binding of aminoacyl-tRNA to the A-site of ribosomes during protein biosynthesis. This is Elongation factor Tu from Ehrlichia ruminantium (strain Gardel).